Consider the following 142-residue polypeptide: Cell division protein SepF (142 aa).

Belongs to the SepF family. In terms of assembly, homodimer. Interacts with FtsZ.

It is found in the cytoplasm. In terms of biological role, cell division protein that is part of the divisome complex and is recruited early to the Z-ring. Probably stimulates Z-ring formation, perhaps through the cross-linking of FtsZ protofilaments. Its function overlaps with FtsA. In Syntrophomonas wolfei subsp. wolfei (strain DSM 2245B / Goettingen), this protein is Cell division protein SepF.